The following is a 301-amino-acid chain: uncharacterized protein (301 aa).

Catalysis depends on charge relay system residues S44 and Y107. Y133 serves as the catalytic Proton donor. K162 serves as the catalytic Schiff-base intermediate with substrate.

This sequence belongs to the DapA family. Homotetramer.

The protein resides in the cytoplasm. This is an uncharacterized protein from Pyrobaculum aerophilum (strain ATCC 51768 / DSM 7523 / JCM 9630 / CIP 104966 / NBRC 100827 / IM2).